The following is a 198-amino-acid chain: Transcription factor FapR (198 aa).

The MaoC-like domain maps to 102-168; the sequence is TRIARGHHLF…GRTVVDVNSY (67 aa).

This sequence belongs to the FapR family.

Its function is as follows. Transcriptional factor involved in regulation of membrane lipid biosynthesis by repressing genes involved in fatty acid and phospholipid metabolism. In Geobacillus thermodenitrificans (strain NG80-2), this protein is Transcription factor FapR.